Consider the following 868-residue polypeptide: Facilitated trehalose transporter Tret1 (868 aa).

Disordered regions lie at residues 1 to 213 and 257 to 314; these read MSGR…QKAT and KESS…LIHR. The Cytoplasmic portion of the chain corresponds to 1–403; it reads MSGRDNRGAG…VYRPTTNPIY (403 aa). The segment covering 25–43 has biased composition (basic and acidic residues); the sequence is KLKEKLTRAGDDQGYHRVE. Low complexity-rich tracts occupy residues 44-57, 79-91, and 117-126; these read SNLS…SLDT, PQQQ…QQLR, and PFQQQQQRTP. Composition is skewed to basic and acidic residues over residues 146 to 155 and 257 to 290; these read EIREHRDRQQ and KESS…KLDK. 5 positions are modified to phosphoserine: Ser-259, Ser-260, Ser-261, Ser-331, and Ser-333. A disordered region spans residues 335–367; the sequence is EDFHTSRQHFQQQRSISTDSRKSRRPYEMDEMG. Residues 342 to 352 show a composition bias toward polar residues; sequence QHFQQQRSIST. Residues 353 to 367 show a composition bias toward basic and acidic residues; it reads DSRKSRRPYEMDEMG. Residues 404 to 424 traverse the membrane as a helical segment; it reads IWTQVLAALSVSLGSLVVGFV. The Extracellular segment spans residues 425 to 451; it reads SAYTSPALVSMTNRNMTSFEVTPQAAS. Asn-439 is a glycosylation site (N-linked (GlcNAc...) asparagine). The helical transmembrane segment at 452-472 threads the bilayer; that stretch reads WVGGIMPLAGLAGGIAGGPFI. Over 473-484 the chain is Cytoplasmic; sequence EYLGRRNTILAT. Residues 485-505 traverse the membrane as a helical segment; sequence AIPFIVSSLLIACAVNVAMVL. The Extracellular segment spans residues 506–508; the sequence is AGR. A helical transmembrane segment spans residues 509–529; it reads FLAGFCVGIASLSLPVYLGET. The Cytoplasmic portion of the chain corresponds to 530–535; it reads VQPEVR. The chain crosses the membrane as a helical span at residues 536–556; sequence GTLGLLPTAFGNIGILLCFVA. The Extracellular portion of the chain corresponds to 557-563; that stretch reads GTYMDWS. Residues 564–584 form a helical membrane-spanning segment; the sequence is MLAFLGAALPVPFLILMFLIP. Over 585-653 the chain is Cytoplasmic; sequence ETPRWFVSRG…NLKPLSISLG (69 aa). Residues 654–674 traverse the membrane as a helical segment; sequence LMFFQQLSGINAVIFYTVSIF. The Extracellular segment spans residues 675-684; that stretch reads KDAGSTIDGN. Residues 685-705 form a helical membrane-spanning segment; the sequence is LCTIIVGIVNFMATFIATLLI. Topologically, residues 706–711 are cytoplasmic; it reads DRAGRK. Residues 712-732 form a helical membrane-spanning segment; sequence ILLYVSNIAMIITLFVLGGFF. Over 733–751 the chain is Extracellular; that stretch reads YCKSHGQDVSQLGWLPLSC. Residues 752-772 form a helical membrane-spanning segment; the sequence is FVIYILGFSLGFGPIPWLMMG. The Cytoplasmic segment spans residues 773–778; it reads EILPSK. The chain crosses the membrane as a helical span at residues 779 to 799; sequence IRGSAASVATAFNWSCTFVVT. The Extracellular portion of the chain corresponds to 800–812; that stretch reads KTFQDMIDFMGAH. The chain crosses the membrane as a helical span at residues 813 to 833; it reads GAFWLFGSICFIGLFFVILYV. The Cytoplasmic portion of the chain corresponds to 834 to 868; the sequence is PETQGKTLEDIERKMMGRVRRMSSVANMKPLAFNM. A phosphoserine mark is found at Ser-856 and Ser-857.

The protein belongs to the major facilitator superfamily. Sugar transporter (TC 2.A.1.1) family. Trehalose transporter subfamily.

It is found in the cell membrane. In terms of biological role, low-capacity facilitative transporter for trehalose. Does not transport maltose, sucrose or lactose. Mediates the bidirectional transfer of trehalose. Responsible for the transport of trehalose synthesized in the fat body and the incorporation of trehalose into other tissues that require a carbon source, thereby regulating trehalose levels in the hemolymph. This Drosophila pseudoobscura pseudoobscura (Fruit fly) protein is Facilitated trehalose transporter Tret1.